The following is a 780-amino-acid chain: Cullin-5 (780 aa).

Serine 34 is modified (phosphoserine). Threonine 210 carries the post-translational modification Phosphothreonine. The 62-residue stretch at 711-772 (RILRTQEAII…HKYIRRDESD (62 aa)) folds into the Cullin neddylation domain. Lysine 724 participates in a covalent cross-link: Glycyl lysine isopeptide (Lys-Gly) (interchain with G-Cter in NEDD8).

The protein belongs to the cullin family. As to quaternary structure, component of multiple cullin-5-RING E3 ubiquitin-protein ligase complexes (ECS complexes, also named CRL5 complexes) formed of CUL5, Elongin BC (ELOB and ELOC), RNF7/RBX2 and a variable SOCS box domain-containing protein as substrate-specific recognition component. CUL5-containing ECS complexes specifically contain RNF7/RBX2, and not RBX1, as catalytic subunit. Component of the ECS(ASB2) complex with the substrate recognition component ASB2. Component of the ECS(ASB6) complex with the substrate recognition component ASB6. Component of the ECS(ASB7) complex with the substrate recognition component ASB7. Component of the ECS(ASB9) complex with the substrate recognition component ASB9. Component of the ECS(ASB11) complex with the substrate recognition component ASB11. Component of the ECS(ASB12) complex with the substrate recognition component ASB12. Component of the ECS(LRRC41) complex with the substrate recognition component LRRC41. Component of the ECS(SOCS1) complex with the substrate recognition component SOCS1. Component of the ECS(SOCS2) complex with the substrate recognition component SOCS2. Component of the ECS(WSB1) complex with the substrate recognition subunit WSB1. Component of the ECS(SOCS3) complex with the substrate recognition component SOCS3. Component of the ECS(SOCS7) complex with the substrate recognition component SOCS7. Component of the ECS(SPSB1) complex with the substrate recognition component SPSB1. Component of the ECS(SPSB3) complex with the substrate recognition component SPSB3. Component of the ECS(SPSB2) complex with the substrate recognition component SPSB2. Component of the ECS(SPSB4) complex with the substrate recognition component SPSB4. Component of the ECS(RAB40) complex with the substrate recognition subunit RAB40A, RAB40B or RAB40C. Component of the ECS(KLHDC1) complex with the substrate recognition component KLHDC1. Component of the ECS(PCMTD1) complex with the substrate recognition subunit PCMTD1. May also form complexes containing RBX1 and ELOA or VHL; additional evidence is however required to confirm this result in vivo. Interacts (when neddylated) with ARIH2; leading to activate the E3 ligase activity of ARIH2. Interacts with ERCC6; the interaction is induced by DNA damaging agents or inhibitors of RNA polymerase II elongation. Interacts with ELOA (via the BC-box). Interacts (unneddylated form) with DCUN1D1, DCUN1D2, DCUN1D3, DCUN1D4 and DCUN1D5; these interactions promote the cullin neddylation. (Microbial infection) Interacts (via the substrate recognition component) with HIV-1 Vif; forming an active cullin-5-RING E3 ubiquitin-protein ligase complex (ECS complex). In terms of assembly, (Microbial infection) Interacts (via the substrate recognition component) with human adenovirus 5 proteins E1B-55K and E4-orf6. As to quaternary structure, (Microbial infection) Interacts with herpes virus 8 protein LANA1; this interaction promotes the degradation of NF-kappa-B component RELA. (Microbial infection) Interacts with molluscum contagiosum virus protein MC132; this interaction promotes the degradation of NF-kappa-B component RELA. Post-translationally, neddylated; which enhances the ubiquitination activity of ECS complexes and prevents binding of the inhibitor CAND1. Deneddylated via its interaction with the COP9 signalosome (CSN).

It localises to the nucleus. It participates in protein modification; protein ubiquitination. Its function is as follows. Core component of multiple cullin-5-RING E3 ubiquitin-protein ligase complexes (ECS complexes, also named CRL5 complexes), which mediate the ubiquitination and subsequent proteasomal degradation of target proteins. Acts a scaffold protein that contributes to catalysis through positioning of the substrate and the ubiquitin-conjugating enzyme. The functional specificity of the E3 ubiquitin-protein ligase complex depends on the variable SOCS box-containing substrate recognition component. Acts as a key regulator of neuron positioning during cortex development: component of various SOCS-containing ECS complexes, such as the ECS(SOCS7) complex, that regulate reelin signaling by mediating ubiquitination and degradation of DAB1. ECS(SOCS1) seems to direct ubiquitination of JAK2. The ECS(SOCS2) complex mediates the ubiquitination and subsequent proteasomal degradation of phosphorylated EPOR and GHR. The ECS(SPSB3) complex catalyzes ubiquitination of nuclear CGAS. ECS(KLHDC1) complex is part of the DesCEND (destruction via C-end degrons) pathway and mediates ubiquitination and degradation of truncated SELENOS selenoprotein produced by failed UGA/Sec decoding, which ends with a glycine. The ECS(ASB9) complex mediates ubiquitination and degradation of CKB. As part of some ECS complex, promotes 'Lys-11'-linked ubiquitination and degradation of BTRC. As part of a multisubunit ECS complex, polyubiquitinates monoubiquitinated POLR2A. As part of the ECS(RAB40C) complex, mediates ANKRD28 ubiquitination and degradation, thereby inhibiting protein phosphatase 6 (PP6) complex activity and focal adhesion assembly during cell migration. As part of the ECS(RAB40A) complex, mediates RHOU 'Lys-48'-linked ubiquitination and degradation, thus inhibiting focal adhesion disassembly during cell migration. As part of the ECS(RAB40B) complex, mediates LIMA1/EPLIN and RAP2 ubiquitination, thereby regulating actin cytoskeleton dynamics and stress fiber formation during cell migration. May form a cell surface vasopressin receptor. In terms of biological role, (Microbial infection) Following infection by HIV-1 virus, CUL5 associates with HIV-1 Vif proteins and forms a cullin-5-RING E3 ubiquitin-protein ligase complex (ECS complex) that catalyzes ubiquitination and degradation of APOBEC3F and APOBEC3G. The complex can also ubiquitinate APOBEC3H to some extent. Functionally, (Microbial infection) Seems to be involved in proteasomal degradation of p53/TP53 stimulated by adenovirus E1B-55 kDa protein. The sequence is that of Cullin-5 from Homo sapiens (Human).